Here is a 123-residue protein sequence, read N- to C-terminus: Small ribosomal subunit protein uS12 (123 aa).

Asp-89 carries the 3-methylthioaspartic acid modification.

This sequence belongs to the universal ribosomal protein uS12 family. In terms of assembly, part of the 30S ribosomal subunit. Contacts proteins S8 and S17. May interact with IF1 in the 30S initiation complex.

In terms of biological role, with S4 and S5 plays an important role in translational accuracy. Its function is as follows. Interacts with and stabilizes bases of the 16S rRNA that are involved in tRNA selection in the A site and with the mRNA backbone. Located at the interface of the 30S and 50S subunits, it traverses the body of the 30S subunit contacting proteins on the other side and probably holding the rRNA structure together. The combined cluster of proteins S8, S12 and S17 appears to hold together the shoulder and platform of the 30S subunit. The protein is Small ribosomal subunit protein uS12 of Orientia tsutsugamushi (strain Ikeda) (Rickettsia tsutsugamushi).